The chain runs to 127 residues: Major sperm protein 33 (127 aa).

An N-acetylalanine modification is found at Ala2. The MSP domain occupies 9–126 (DIQTQPGTKI…RRKNLPIEYN (118 aa)).

In terms of tissue distribution, sperm.

The protein localises to the cell projection. Its subcellular location is the pseudopodium. The protein resides in the cytoplasm. It localises to the cytoskeleton. In terms of biological role, central component in molecular interactions underlying sperm crawling. Forms an extensive filament system that extends from sperm villipoda, along the leading edge of the pseudopod. This Caenorhabditis elegans protein is Major sperm protein 33 (msp-33).